The primary structure comprises 80 residues: UPF0154 protein SH1564 (80 aa).

Residues 4–24 traverse the membrane as a helical segment; the sequence is WLAILLIIVALIGGLVGGFFL.

It belongs to the UPF0154 family.

The protein localises to the membrane. In Staphylococcus haemolyticus (strain JCSC1435), this protein is UPF0154 protein SH1564.